The primary structure comprises 338 residues: m7GpppX diphosphatase (338 aa).

The interval 1-36 (MADTAPQLKRKREQEAEEAETPSTEEKEAGVGNGTS) is disordered. An N-acetylalanine modification is found at Ala-2. The nuclear localization signal (NLS) motif lies at 9–12 (KRKR). Phosphoserine is present on residues Ser-23 and Ser-100. 2 positions are modified to N6-acetyllysine: Lys-137 and Lys-141. The nuclear export sequence (NES) signature appears at 141–153 (KYMRQDLRLIRET). Residues Trp-174, Glu-184, Asp-204, Lys-206, and 267 to 278 (HYLPSYYHLHVH) contribute to the substrate site. Residues 274 to 278 (HLHVH) carry the Histidine triad motif motif. His-276 functions as the Nucleophile in the catalytic mechanism.

The protein belongs to the HIT family. In terms of assembly, homodimer. Associates with components of the exosome multienzyme ribonuclease complex, such as EXOSC3 and EXOSC4. Interacts with NDOR1.

The protein resides in the cytoplasm. It localises to the nucleus. It catalyses the reaction a 5'-end (N(7)-methyl 5'-triphosphoguanosine)-ribonucleoside in mRNA + H2O = N(7)-methyl-GMP + a 5'-end diphospho-ribonucleoside in mRNA + 2 H(+). Its activity is regulated as follows. The hydrolytic product 7-methylguanosine diphosphate (m7GDP) efficiently inhibits the decapping scavenger activity and acts as a competitive inhibitor in vitro. Inhibited by 2,4-diaminoquinazoline. Decapping scavenger enzyme that catalyzes the cleavage of a residual cap structure following the degradation of mRNAs by the 3'-&gt;5' exosome-mediated mRNA decay pathway. Hydrolyzes cap analog structures like 7-methylguanosine nucleoside triphosphate (m7GpppG) with up to 10 nucleotide substrates (small capped oligoribonucleotides) and specifically releases 5'-phosphorylated RNA fragments and 7-methylguanosine monophosphate (m7GMP). Cleaves cap analog structures like tri-methyl guanosine nucleoside triphosphate (m3(2,2,7)GpppG) with very poor efficiency. Does not hydrolyze unmethylated cap analog (GpppG) and shows no decapping activity on intact m7GpppG-capped mRNA molecules longer than 25 nucleotides. Does not hydrolyze 7-methylguanosine diphosphate (m7GDP) to m7GMP. May also play a role in the 5'-&gt;3 mRNA decay pathway; m7GDP, the downstream product released by the 5'-&gt;3' mRNA mediated decapping activity, may be also converted by DCPS to m7GMP. Binds to m7GpppG and strongly to m7GDP. Plays a role in first intron splicing of pre-mRNAs. Inhibits activation-induced cell death. The polypeptide is m7GpppX diphosphatase (Dcps) (Mus musculus (Mouse)).